Consider the following 290-residue polypeptide: ATP synthase gamma chain (290 aa).

This sequence belongs to the ATPase gamma chain family. In terms of assembly, F-type ATPases have 2 components, CF(1) - the catalytic core - and CF(0) - the membrane proton channel. CF(1) has five subunits: alpha(3), beta(3), gamma(1), delta(1), epsilon(1). CF(0) has three main subunits: a, b and c.

It is found in the cell membrane. Produces ATP from ADP in the presence of a proton gradient across the membrane. The gamma chain is believed to be important in regulating ATPase activity and the flow of protons through the CF(0) complex. This is ATP synthase gamma chain from Rubrobacter xylanophilus (strain DSM 9941 / JCM 11954 / NBRC 16129 / PRD-1).